We begin with the raw amino-acid sequence, 294 residues long: MTKAVLTSISQLALKALLYEVSLSPKPGLVDRFDNGAHDDMSFMTFIDSMIALSPFFQAYIETGFAYAKEEPLLLFNRLRQLGQKAEETMFCATQGINTHKGLNFSMALLLGATGAYLARTPHLMTDLGCFSKEDTLAICRLVKSMTAHLIQTDLGHLNTKKEFTYGEQLFVTYGIKGPRGEASEGFTTLTDHALPYFRQMISQNDPETSQLRLLVYLMSIVEDGNLIHRGGIEAWKGVKADMRLLLQQDLSTTDLRLALSSYNQCLINQHLSPGGAADLLALTFYFAFLEKLL.

The protein belongs to the CitG/MdcB family.

It carries out the reaction 3'-dephospho-CoA + ATP = 2'-(5''-triphospho-alpha-D-ribosyl)-3'-dephospho-CoA + adenine. The polypeptide is Probable 2-(5''-triphosphoribosyl)-3'-dephosphocoenzyme-A synthase (Streptococcus pyogenes serotype M49 (strain NZ131)).